The chain runs to 431 residues: 3-phosphoshikimate 1-carboxyvinyltransferase (431 aa).

3 residues coordinate 3-phosphoshikimate: Lys26, Ser27, and Arg31. Lys26 is a phosphoenolpyruvate binding site. Gly99 and Arg127 together coordinate phosphoenolpyruvate. Residues Ser170, Ser171, Gln172, Ser199, Glu314, and His343 each contribute to the 3-phosphoshikimate site. Gln172 provides a ligand contact to phosphoenolpyruvate. Glu314 acts as the Proton acceptor in catalysis. 3 residues coordinate phosphoenolpyruvate: Arg347, Arg388, and Lys413.

Belongs to the EPSP synthase family. As to quaternary structure, monomer.

It localises to the cytoplasm. The catalysed reaction is 3-phosphoshikimate + phosphoenolpyruvate = 5-O-(1-carboxyvinyl)-3-phosphoshikimate + phosphate. The protein operates within metabolic intermediate biosynthesis; chorismate biosynthesis; chorismate from D-erythrose 4-phosphate and phosphoenolpyruvate: step 6/7. In terms of biological role, catalyzes the transfer of the enolpyruvyl moiety of phosphoenolpyruvate (PEP) to the 5-hydroxyl of shikimate-3-phosphate (S3P) to produce enolpyruvyl shikimate-3-phosphate and inorganic phosphate. The polypeptide is 3-phosphoshikimate 1-carboxyvinyltransferase (Mycobacterium ulcerans (strain Agy99)).